Reading from the N-terminus, the 165-residue chain is Small ribosomal subunit protein uS5 (165 aa).

The S5 DRBM domain occupies 10 to 73; that stretch reads LVEKLVSVDR…EAAKRNMITV (64 aa).

This sequence belongs to the universal ribosomal protein uS5 family. Part of the 30S ribosomal subunit. Contacts proteins S4 and S8.

In terms of biological role, with S4 and S12 plays an important role in translational accuracy. Functionally, located at the back of the 30S subunit body where it stabilizes the conformation of the head with respect to the body. This is Small ribosomal subunit protein uS5 from Psychrobacter sp. (strain PRwf-1).